The sequence spans 312 residues: 2-phospho-L-lactate transferase (312 aa).

Residues Asp-50 and Lys-89 each coordinate 7,8-didemethyl-8-hydroxy-5-deazariboflavin.

This sequence belongs to the CofD family. In terms of assembly, homodimer. The cofactor is Mg(2+).

The catalysed reaction is (2S)-lactyl-2-diphospho-5'-guanosine + 7,8-didemethyl-8-hydroxy-5-deazariboflavin = oxidized coenzyme F420-0 + GMP + H(+). Its pathway is cofactor biosynthesis; coenzyme F420 biosynthesis. Catalyzes the transfer of the 2-phospholactate moiety from (2S)-lactyl-2-diphospho-5'-guanosine to 7,8-didemethyl-8-hydroxy-5-deazariboflavin (FO) with the formation of oxidized coenzyme F420-0 and GMP. This chain is 2-phospho-L-lactate transferase, found in Methanococcus vannielii (strain ATCC 35089 / DSM 1224 / JCM 13029 / OCM 148 / SB).